The sequence spans 123 residues: Small ribosomal subunit protein uS12 (123 aa).

The segment at 1-27 (MPTIQQLIRKPRQPKIKRSKSMHLQEC) is disordered. A compositionally biased stretch (basic residues) spans 9-21 (RKPRQPKIKRSKS). A 3-methylthioaspartic acid modification is found at aspartate 89.

Belongs to the universal ribosomal protein uS12 family. In terms of assembly, part of the 30S ribosomal subunit. Contacts proteins S8 and S17. May interact with IF1 in the 30S initiation complex.

With S4 and S5 plays an important role in translational accuracy. Its function is as follows. Interacts with and stabilizes bases of the 16S rRNA that are involved in tRNA selection in the A site and with the mRNA backbone. Located at the interface of the 30S and 50S subunits, it traverses the body of the 30S subunit contacting proteins on the other side and probably holding the rRNA structure together. The combined cluster of proteins S8, S12 and S17 appears to hold together the shoulder and platform of the 30S subunit. This chain is Small ribosomal subunit protein uS12, found in Roseobacter denitrificans (strain ATCC 33942 / OCh 114) (Erythrobacter sp. (strain OCh 114)).